Consider the following 6298-residue polypeptide: Adhesion G-protein coupled receptor V1 (6298 aa).

A signal peptide spans 1–28 (MSVTSEPGMISSFLLVYLSTLFISFVFG). Calx-beta domains lie at 29–116 (EAEI…FHLT), 132–236 (ASVT…IQLR), 251–362 (VEII…IMLL), 389–489 (YGVL…LTIL), 646–746 (PAIA…TLSL), 764–862 (DLII…VILS), 877–980 (VNIT…IILL), 994–1094 (ASLR…IVLF), 1108–1208 (ATVI…LRLV), 1440–1540 (AMPR…FLLK), 1562–1662 (QKSD…VTLV), 1706–1805 (TGLP…VELL), 1846–1948 (ILVT…VSIL), 1962–2075 (TLTI…IELF), 2103–2202 (HLVI…VQLL), 2218–2320 (VITI…VQLA), 2437–2537 (TLCL…FLIS), 2576–2672 (FIIY…VRLG), 2687–2786 (VTVN…VVLY), 2810–2921 (LTVE…VNLT), 2945–3044 (QIVI…LLLT), and 3067–3167 (DGPG…VCTL). The Extracellular segment spans residues 29 to 5901 (EAEIRFTGQT…TDNSSSYNEA (5873 aa)). EAR repeat units follow at residues 3251-3292 (VFSI…RWQG), 3293-3341 (TFVP…MLTA), 3344-3389 (RLVL…RWNG), 3391-3435 (NFAW…TWSG), 3437-3484 (QFIN…VWEM), and 3488-3530 (SLRY…CWNS). Calx-beta domains follow at residues 3581–3622 (QSDF…RVQL), 3636–3736 (SVRV…VVTL), 3772–3872 (GAVR…VTIA), 3919–4003 (GGVI…ISLV), 4017–4120 (VNVV…IELT), 4135–4235 (SVII…EFQL), 4251–4351 (ARIT…LAIT), 4384–4484 (RIII…ILLI), 4507–4607 (SPFG…IVQL), 4628–4728 (KFGD…AVQL), 4989–5089 (TTAE…INLT), 5281–5325 (AVEE…YVFL), and 5361–5461 (IGFS…FVEL). A GAIN-B domain is found at 5740–5896 (SILALHWNPQ…AVYAQTDNSS (157 aa)). Cystine bridges form between C5849/C5878 and C5866/C5880. The segment at 5849–5896 (CLLWNQAAASWLSDSQFCKVVEDASDYVECACSHMSVYAVYAQTDNSS) is GPS. The chain crosses the membrane as a helical span at residues 5902-5922 (FFSAGLICISGLCLAVVSHMF). Topologically, residues 5923–5932 (CARHSMFAAK) are cytoplasmic. The chain crosses the membrane as a helical span at residues 5933-5953 (LLTHMMVASLGTQILFLASAY). Residues 5954 to 5973 (ASPHLSEESCSAVAAVAHYL) are Extracellular-facing. A helical transmembrane segment spans residues 5974–5994 (YLCQFSWMLIQSVNFWYVLVV). The Cytoplasmic portion of the chain corresponds to 5995-6003 (SDEHTERRC). The helical transmembrane segment at 6004 to 6024 (LLFCLLSWGLPSFVVILLILI) threads the bilayer. Residues 6025 to 6052 (LRGIYHRSMPQIYGLIHGDLCFIPNIYA) are Extracellular-facing. A helical transmembrane segment spans residues 6053–6073 (ALFTAALVPLMCLVVVFVVFI). The Cytoplasmic portion of the chain corresponds to 6074–6097 (HAYQLKPQWKGYDDVFRGRTNAAE). A helical transmembrane segment spans residues 6098 to 6118 (IPLILYLFALISMTWLWGGLH). Residues 6119-6126 (MAYGHFWM) lie on the Extracellular side of the membrane. Residues 6127–6147 (LVLFVIFNSLQGLYVFVVYFI) form a helical membrane-spanning segment. The Cytoplasmic segment spans residues 6148-6298 (LHNQTCCPMK…RRIPIADTHL (151 aa)). Disordered regions lie at residues 6206–6242 (ERSS…GSLI) and 6264–6283 (SVSD…LTDS). 2 stretches are compositionally biased toward polar residues: residues 6208–6226 (SSFQ…SPQN) and 6265–6283 (VSDN…LTDS).

It belongs to the G-protein coupled receptor 2 family. Adhesion G-protein coupled receptor (ADGR) subfamily. Forms a heterodimer, consisting of a large extracellular region (alpha subunit) non-covalently linked to a seven-transmembrane moiety (beta subunit). Interacts (via the cytoplasmic region) with PDZD7. Component of USH2 complex, composed of ADGRV1, PDZD7, USH2A and WHRN. Interacts with USH2A and WHRN. Interacts (via the cytoplasmic region) with MYO7A (via MyTH4-FERM domains). Post-translationally, autoproteolytically cleaved into 2 subunits, an extracellular alpha subunit and a seven-transmembrane subunit. Expressed by oligodendrocytes. In midbrain, enriched in the myelinated regions of the superior and inferior colliculi. In the cochlea, expressed in developing hair cells. Expressed by photoreceptors in the retina.

The protein localises to the cell membrane. Its subcellular location is the cell projection. The protein resides in the stereocilium membrane. It localises to the photoreceptor inner segment. It is found in the secreted. Its function is as follows. G-protein coupled receptor which has an essential role in the development of hearing and vision. Couples to G-alpha(i)-proteins, GNAI1/2/3, G-alpha(q)-proteins, GNAQ, as well as G-alpha(s)-proteins, GNAS, inhibiting adenylate cyclase (AC) activity and cAMP production. Required for the hair bundle ankle formation, which connects growing stereocilia in developing cochlear hair cells of the inner ear. In response to extracellular calcium, activates kinases PKA and PKC to regulate myelination by inhibiting the ubiquitination of MAG, thus enhancing the stability of this protein in myelin-forming cells of the auditory pathway. In retina photoreceptors, the USH2 complex is required for the maintenance of periciliary membrane complex that seems to play a role in regulating intracellular protein transport. Involved in the regulation of bone metabolism. In terms of biological role, cleaved ADGRV1 beta-subunit couples with G-alpha(i)-proteins, GNAI1/2/3, and constitutively inhibits adenylate cyclase (AC) activity with a stronger effect than full ADGRV1. In Mus musculus (Mouse), this protein is Adhesion G-protein coupled receptor V1.